The chain runs to 1404 residues: DNA-directed RNA polymerase subunit beta' (1404 aa).

Residues Cys-70, Cys-72, Cys-85, and Cys-88 each coordinate Zn(2+). Positions 460, 462, and 464 each coordinate Mg(2+). Zn(2+) contacts are provided by Cys-814, Cys-888, Cys-895, and Cys-898.

Belongs to the RNA polymerase beta' chain family. In terms of assembly, the RNAP catalytic core consists of 2 alpha, 1 beta, 1 beta' and 1 omega subunit. When a sigma factor is associated with the core the holoenzyme is formed, which can initiate transcription. Mg(2+) serves as cofactor. The cofactor is Zn(2+).

It carries out the reaction RNA(n) + a ribonucleoside 5'-triphosphate = RNA(n+1) + diphosphate. Its function is as follows. DNA-dependent RNA polymerase catalyzes the transcription of DNA into RNA using the four ribonucleoside triphosphates as substrates. The polypeptide is DNA-directed RNA polymerase subunit beta' (Shewanella piezotolerans (strain WP3 / JCM 13877)).